Reading from the N-terminus, the 123-residue chain is Small ribosomal subunit protein uS12 (123 aa).

A 3-methylthioaspartic acid modification is found at aspartate 89. The disordered stretch occupies residues 104–123 (TQGVKDRRQRRSKYGAKRPK). The segment covering 110 to 123 (RRQRRSKYGAKRPK) has biased composition (basic residues).

The protein belongs to the universal ribosomal protein uS12 family. In terms of assembly, part of the 30S ribosomal subunit. Contacts proteins S8 and S17. May interact with IF1 in the 30S initiation complex.

In terms of biological role, with S4 and S5 plays an important role in translational accuracy. Its function is as follows. Interacts with and stabilizes bases of the 16S rRNA that are involved in tRNA selection in the A site and with the mRNA backbone. Located at the interface of the 30S and 50S subunits, it traverses the body of the 30S subunit contacting proteins on the other side and probably holding the rRNA structure together. The combined cluster of proteins S8, S12 and S17 appears to hold together the shoulder and platform of the 30S subunit. The chain is Small ribosomal subunit protein uS12 from Rhodospirillum rubrum (strain ATCC 11170 / ATH 1.1.1 / DSM 467 / LMG 4362 / NCIMB 8255 / S1).